Here is a 331-residue protein sequence, read N- to C-terminus: Glycerophosphodiester phosphodiesterase 1 (331 aa).

At 1-3 (MWL) the chain is on the cytoplasmic side. The chain crosses the membrane as a helical span at residues 4-24 (WEDQGGLLGPFSFLLLVLLLV). Over 25 to 247 (TRSPVNACLL…KPRYDTFWKH (223 aa)) the chain is Lumenal. Residues 65–331 (ISAIAHRGGS…SMVEDCEPHF (267 aa)) enclose the GP-PDE domain. Mg(2+)-binding residues include E97 and D99. A glycan (N-linked (GlcNAc...) asparagine) is linked at N168. D174 provides a ligand contact to Mg(2+). N198 carries an N-linked (GlcNAc...) asparagine glycan. A helical membrane pass occupies residues 248–268 (FIFVMMDILLDWSMHNILWYL). The Cytoplasmic portion of the chain corresponds to 269–331 (CGISAFLMQK…SMVEDCEPHF (63 aa)).

Belongs to the glycerophosphoryl diester phosphodiesterase family. In terms of assembly, interacts with PRAF2. Interacts with RGS16. Mg(2+) serves as cofactor. Post-translationally, N-glycosylated. As to expression, widely expressed.

It is found in the cell membrane. It localises to the cytoplasmic vesicle membrane. It catalyses the reaction sn-glycero-3-phospho-1D-myo-inositol + H2O = myo-inositol + sn-glycerol 3-phosphate + H(+). It carries out the reaction 1-O-(1Z-octadecenyl)-sn-glycero-3-phospho-(N-5Z,8Z,11Z,14Z-eicosatetraenoyl)-ethanolamine + H2O = 1-O-(1Z-octadecenyl)-sn-glycero-3-phosphate + N-(5Z,8Z,11Z,14Z-eicosatetraenoyl)-ethanolamine + H(+). The enzyme catalyses 1-O-(1Z-octadecenyl)-sn-glycero-3-phospho-(N-9Z-octadecenoyl)-ethanolamine + H2O = 1-O-(1Z-octadecenyl)-sn-glycero-3-phosphate + N-(9Z-octadecenoyl) ethanolamine + H(+). The catalysed reaction is 1-O-(1Z-octadecenyl)-sn-glycero-3-phospho-N-hexadecanoyl-ethanolamine + H2O = 1-O-(1Z-octadecenyl)-sn-glycero-3-phosphate + N-hexadecanoylethanolamine + H(+). It catalyses the reaction N-(4Z,7Z,10Z,13Z,16Z,19Z)-docosahexaenoyl-sn-glycero-3-phosphoethanolamine + H2O = N-(4Z,7Z,10Z,13Z,16Z,19Z)-docosahexaenoyl ethanolamine + sn-glycerol 3-phosphate + H(+). It carries out the reaction N-eicosanoyl-sn-glycero-3-phosphoethanolamine + H2O = N-eicosanoyl ethanolamine + sn-glycerol 3-phosphate + H(+). The enzyme catalyses N-hexadecanoyl-sn-glycero-3-phosphoethanolamine + H2O = N-hexadecanoylethanolamine + sn-glycerol 3-phosphate + H(+). The catalysed reaction is N-(9Z-octadecenoyl)-sn-glycero-3-phosphoethanolamine + H2O = N-(9Z-octadecenoyl) ethanolamine + sn-glycerol 3-phosphate + H(+). It catalyses the reaction N-(5Z,8Z,11Z,14Z-eicosatetraenoyl)-sn-glycero-3-phosphoethanolamine + H2O = N-(5Z,8Z,11Z,14Z-eicosatetraenoyl)-ethanolamine + sn-glycerol 3-phosphate + H(+). Its activity is regulated as follows. Inhibited by EDTA, calcium chloride, and zinc chloride. Enhanced by magnesium chloride. Glycerophosphodiester phosphodiesterase activity can be modulated by G-protein signaling pathways. Its function is as follows. Hydrolyzes the phosphodiester bond of glycerophosphodiesters such as glycerophosphoinositol (GroPIns) and glycerophosphoethanolamine (GroPEth), to yield a glycerol phosphate and an alcohol. Hydrolyzes glycerophospho-N-acylethanolamines to N-acylethanolamines in the brain and participates in bioactive N-acylethanolamine biosynthesis such as anandamide (an endocannabinoid), N-palmitoylethanolamine (an anti-inflammatory), and N-oleoylethanolamine (an anorexic). In addition, has a lysophospholipase D activity by hydrolyzing N-acyl-lysoplasmenylethanolamine (N-acyl-lysoPlsEt) to N-acylethanolamine. However lysophospholipase D activity is lower than glycerophosphodiester phosphodiesterase activity. Has little or no activity towards glycerophosphocholine. This is Glycerophosphodiester phosphodiesterase 1 from Homo sapiens (Human).